A 623-amino-acid polypeptide reads, in one-letter code: Sodium-coupled monocarboxylate transporter 2 (623 aa).

At 1 to 10 (METVGRFQAG) the chain is on the extracellular side. A helical membrane pass occupies residues 11–31 (DYVVFACLFVVSSGIGVFFAI). The Cytoplasmic segment spans residues 32–50 (KERNKAPSKEFLVGGRQMS). The helical transmembrane segment at 51–71 (CGPVALSLTASFMSAVTVIGA) threads the bilayer. Topologically, residues 72 to 83 (PADVYRFGASYV) are extracellular. A helical transmembrane segment spans residues 84–104 (IFGVAYTFVVFFTAELFLPVF). The Cytoplasmic portion of the chain corresponds to 105 to 129 (YRSGITSTYEYLELRFCKLVRVAAT). A helical transmembrane segment spans residues 130 to 150 (LIYIIQTILYTGVVVYAPALA). Over 151–158 (LNQVTGFD) the chain is Extracellular. A helical membrane pass occupies residues 159–179 (LWGSIFATGIVCTFYCTLGGL). At 180-181 (KA) the chain is on the cytoplasmic side. Residues 182–202 (VVWTDAFQMVVMVVGFLTVLI) form a helical membrane-spanning segment. Topologically, residues 203–236 (QGSSRAGGIENVWSTSRTGGRLQVFDFDVSPLRR) are extracellular. A helical membrane pass occupies residues 237–257 (HTFWTLSVGGTFTWLGIYGVN). Residues 258–276 (QSTIQRCISCKTEGHARWA) are Cytoplasmic-facing. Residues 277-297 (LYLNLLGLWIILFCAVVSGLI) form a helical membrane-spanning segment. Residues 298 to 322 (MYSYYSHCDPWSSGLISAPDQLMPY) lie on the Extracellular side of the membrane. The helical transmembrane segment at 323–343 (FVMEILGAFPGLPGLFVACAF) threads the bilayer. Residues 344 to 386 (SGTLSTVAASINALATVMYEDFVSQCFPDLSNRAASWISKALC) are Cytoplasmic-facing. A helical transmembrane segment spans residues 387-407 (VAFGVACTTMAVAASYMGGIV). The Extracellular portion of the chain corresponds to 408–412 (QAALS). A helical transmembrane segment spans residues 413 to 433 (IHGMCGGPVLGLFSLGILFPF). Over 434-438 (TNLKG) the chain is Cytoplasmic. Residues 439–459 (AVGGLIVGISLSFWVGVGAFI) form a helical membrane-spanning segment. The Extracellular segment spans residues 460–510 (YPAPSNNTHALELNTAGCNITAAAFEPTSATVTQLTSDRNWLADSWYSMSY). N-linked (GlcNAc...) asparagine glycosylation is found at N465 and N478. A helical membrane pass occupies residues 511 to 531 (LYYSAVGFIGTVAAGLLITLL). At 532–623 (TGPMDPKLLK…NETSIVQKKL (92 aa)) the chain is on the cytoplasmic side.

This sequence belongs to the sodium:solute symporter (SSF) (TC 2.A.21) family.

It is found in the apical cell membrane. It catalyses the reaction (S)-lactate(out) + Na(+)(out) = (S)-lactate(in) + Na(+)(in). The catalysed reaction is nicotinate(out) + Na(+)(out) = nicotinate(in) + Na(+)(in). It carries out the reaction pyruvate(out) + Na(+)(out) = pyruvate(in) + Na(+)(in). The enzyme catalyses propanoate(out) + Na(+)(out) = propanoate(in) + Na(+)(in). It catalyses the reaction butanoate(out) + Na(+)(out) = butanoate(in) + Na(+)(in). The catalysed reaction is acetoacetate(out) + Na(+)(out) = acetoacetate(in) + Na(+)(in). In terms of biological role, acts as an electroneutral and low-affinity sodium (Na(+))-dependent sodium-coupled solute transporter. Catalyzes the transport across the plasma membrane of many monocarboxylates such as lactate, pyruvate, nicotinate, propionate, butyrate and beta-D-hydroxybutyrate. The protein is Sodium-coupled monocarboxylate transporter 2 (slc5a12) of Danio rerio (Zebrafish).